The chain runs to 449 residues: Trigger factor (449 aa).

Residues 173-258 (GDRVTVDFVG…MKKVEWPHLP (86 aa)) form the PPIase FKBP-type domain.

It belongs to the FKBP-type PPIase family. Tig subfamily.

The protein resides in the cytoplasm. The enzyme catalyses [protein]-peptidylproline (omega=180) = [protein]-peptidylproline (omega=0). In terms of biological role, involved in protein export. Acts as a chaperone by maintaining the newly synthesized protein in an open conformation. Functions as a peptidyl-prolyl cis-trans isomerase. This is Trigger factor from Burkholderia thailandensis (strain ATCC 700388 / DSM 13276 / CCUG 48851 / CIP 106301 / E264).